Here is a 137-residue protein sequence, read N- to C-terminus: uncharacterized protein (137 aa).

Residues 31 to 83 (PASPINDKEKDKAGGRLPSGSEPRARAFCEAGADGEQGDPSPADTIKANQGHI) are disordered.

This is an uncharacterized protein from Homo sapiens (Human).